The chain runs to 545 residues: Chaperonin GroEL 2 (545 aa).

Residues threonine 29–proline 32, aspartate 86–threonine 90, glycine 413, asparagine 479–alanine 481, and aspartate 495 each bind ATP.

It belongs to the chaperonin (HSP60) family. In terms of assembly, forms a cylinder of 14 subunits composed of two heptameric rings stacked back-to-back. Interacts with the co-chaperonin GroES.

It is found in the cytoplasm. The catalysed reaction is ATP + H2O + a folded polypeptide = ADP + phosphate + an unfolded polypeptide.. Functionally, together with its co-chaperonin GroES, plays an essential role in assisting protein folding. The GroEL-GroES system forms a nano-cage that allows encapsulation of the non-native substrate proteins and provides a physical environment optimized to promote and accelerate protein folding. The polypeptide is Chaperonin GroEL 2 (Prochlorococcus marinus (strain MIT 9215)).